We begin with the raw amino-acid sequence, 525 residues long: Protein disulfide-isomerase A2 (525 aa).

Residues 1-21 (MSRQLLPVLLLLLLRASCPWG) form the signal peptide. The region spanning 27–152 (RSPSEEPPEE…IAEWLRRRVG (126 aa)) is the Thioredoxin 1 domain. Catalysis depends on nucleophile residues Cys-71 and Cys-74. An intrachain disulfide couples Cys-71 to Cys-74. Residues Asn-127 and Asn-284 are each glycosylated (N-linked (GlcNAc...) asparagine). The region spanning 367–496 (VLNGQVKPYL…FSKFLDNGGV (130 aa)) is the Thioredoxin 2 domain. Catalysis depends on nucleophile residues Cys-418 and Cys-421. A disulfide bridge connects residues Cys-418 and Cys-421. Residues 492–525 (DNGGVLPTEEPPEEPAAPFPEPPANSTMGSKEEL) form a disordered region. Over residues 505–514 (EPAAPFPEPP) the composition is skewed to pro residues. The N-linked (GlcNAc...) asparagine glycan is linked to Asn-516. The span at 516–525 (NSTMGSKEEL) shows a compositional bias: polar residues. Residues 522 to 525 (KEEL) carry the Prevents secretion from ER motif.

It belongs to the protein disulfide isomerase family. In terms of assembly, monomer; predominantly as monomer under reducing conditions. Homodimer; disulfide-linked. Part of a large chaperone multiprotein complex comprising DNAJB11, HSP90B1, HSPA5, HYOU, PDIA2, PDIA4, PDIA6, PPIB, SDF2L1, UGGT1 and very small amounts of ERP29, but not, or at very low levels, CALR nor CANX. The disulfide-linked homodimer exhibits an enhanced chaperone activity. Post-translationally, glycosylated. Highly expressed in pancreas (at protein level).

It localises to the endoplasmic reticulum lumen. It carries out the reaction Catalyzes the rearrangement of -S-S- bonds in proteins.. In terms of biological role, acts as an intracellular estrogen-binding protein. May be involved in modulating cellular levels and biological functions of estrogens in the pancreas. May act as a chaperone that inhibits aggregation of misfolded proteins. The polypeptide is Protein disulfide-isomerase A2 (PDIA2) (Homo sapiens (Human)).